A 118-amino-acid chain; its full sequence is Large ribosomal subunit protein bL20c (118 aa).

This sequence belongs to the bacterial ribosomal protein bL20 family.

It localises to the plastid. Its subcellular location is the chloroplast. Binds directly to 23S ribosomal RNA and is necessary for the in vitro assembly process of the 50S ribosomal subunit. It is not involved in the protein synthesizing functions of that subunit. In Gracilaria tenuistipitata var. liui (Red alga), this protein is Large ribosomal subunit protein bL20c.